The chain runs to 412 residues: Imidazolonepropionase (412 aa).

Fe(3+) contacts are provided by histidine 76 and histidine 78. Residues histidine 76 and histidine 78 each contribute to the Zn(2+) site. Arginine 85, tyrosine 148, and histidine 181 together coordinate 4-imidazolone-5-propanoate. N-formimidoyl-L-glutamate is bound at residue tyrosine 148. Histidine 242 contacts Fe(3+). Histidine 242 is a binding site for Zn(2+). Glutamate 245 contributes to the 4-imidazolone-5-propanoate binding site. Fe(3+) is bound at residue aspartate 317. Position 317 (aspartate 317) interacts with Zn(2+). 2 residues coordinate N-formimidoyl-L-glutamate: asparagine 319 and glycine 321. Residue serine 322 coordinates 4-imidazolone-5-propanoate.

This sequence belongs to the metallo-dependent hydrolases superfamily. HutI family. It depends on Zn(2+) as a cofactor. Fe(3+) serves as cofactor.

Its subcellular location is the cytoplasm. The catalysed reaction is 4-imidazolone-5-propanoate + H2O = N-formimidoyl-L-glutamate. It participates in amino-acid degradation; L-histidine degradation into L-glutamate; N-formimidoyl-L-glutamate from L-histidine: step 3/3. Its function is as follows. Catalyzes the hydrolytic cleavage of the carbon-nitrogen bond in imidazolone-5-propanoate to yield N-formimidoyl-L-glutamate. It is the third step in the universal histidine degradation pathway. The chain is Imidazolonepropionase from Staphylococcus aureus (strain MSSA476).